The following is a 278-amino-acid chain: Thiazole synthase (278 aa).

The active-site Schiff-base intermediate with DXP is Lys-109. 1-deoxy-D-xylulose 5-phosphate is bound by residues Gly-170, 197 to 198, and 219 to 220; these read AG and NT.

Belongs to the ThiG family. In terms of assembly, homotetramer. Forms heterodimers with either ThiH or ThiS.

It is found in the cytoplasm. It catalyses the reaction [ThiS sulfur-carrier protein]-C-terminal-Gly-aminoethanethioate + 2-iminoacetate + 1-deoxy-D-xylulose 5-phosphate = [ThiS sulfur-carrier protein]-C-terminal Gly-Gly + 2-[(2R,5Z)-2-carboxy-4-methylthiazol-5(2H)-ylidene]ethyl phosphate + 2 H2O + H(+). Its pathway is cofactor biosynthesis; thiamine diphosphate biosynthesis. Catalyzes the rearrangement of 1-deoxy-D-xylulose 5-phosphate (DXP) to produce the thiazole phosphate moiety of thiamine. Sulfur is provided by the thiocarboxylate moiety of the carrier protein ThiS. In vitro, sulfur can be provided by H(2)S. This is Thiazole synthase from Cupriavidus taiwanensis (strain DSM 17343 / BCRC 17206 / CCUG 44338 / CIP 107171 / LMG 19424 / R1) (Ralstonia taiwanensis (strain LMG 19424)).